The primary structure comprises 40 residues: Photosystem II reaction center protein J (40 aa).

A helical transmembrane segment spans residues 8–28 (IPLWLIGTVTGIPVIGSIGIF).

This sequence belongs to the PsbJ family. In terms of assembly, PSII is composed of 1 copy each of membrane proteins PsbA, PsbB, PsbC, PsbD, PsbE, PsbF, PsbH, PsbI, PsbJ, PsbK, PsbL, PsbM, PsbT, PsbX, PsbY, PsbZ, Psb30/Ycf12, at least 3 peripheral proteins of the oxygen-evolving complex and a large number of cofactors. It forms dimeric complexes.

It is found in the plastid. It localises to the chloroplast thylakoid membrane. Functionally, one of the components of the core complex of photosystem II (PSII). PSII is a light-driven water:plastoquinone oxidoreductase that uses light energy to abstract electrons from H(2)O, generating O(2) and a proton gradient subsequently used for ATP formation. It consists of a core antenna complex that captures photons, and an electron transfer chain that converts photonic excitation into a charge separation. This is Photosystem II reaction center protein J from Chloranthus spicatus (Chulantree).